We begin with the raw amino-acid sequence, 73 residues long: Alpha-bungarotoxin N3 (73 aa).

Intrachain disulfides connect Cys-3–Cys-23, Cys-16–Cys-43, Cys-28–Cys-32, Cys-47–Cys-58, and Cys-59–Cys-64.

Belongs to the three-finger toxin family. Long-chain subfamily. Type II alpha-neurotoxin sub-subfamily. In terms of assembly, monomer in solution, homodimer in crystal state. Expressed by the venom gland.

The protein resides in the secreted. Functionally, binds with high affinity to muscular (alpha-1/CHRNA1) and neuronal (alpha-7/CHRNA7) nicotinic acetylcholine receptor (nAChR) and inhibits acetylcholine from binding to the receptor, thereby impairing neuromuscular and neuronal transmission. Mice injected with this toxin develop flaccid paralysis followed by death. Irreversibly inhibits twitches in a concentration-dependent manner in rat phrenic nerve-hemidiaphragm and chick biventer cervicis muscle. This chain is Alpha-bungarotoxin N3, found in Bungarus candidus (Malayan krait).